A 174-amino-acid chain; its full sequence is Mitochondrial protein import protein ZIM17 (174 aa).

Residues 1-47 (MIPRTRTLLQSKIPITRYFARCWAPRVRYNVCRTLPAAALHTNIIAH) constitute a mitochondrion transit peptide. The DNL-type zinc finger occupies 64–159 (VDKPKMMIAF…LKDVLGKYAK (96 aa)). Cys-75, Cys-78, Cys-100, and Cys-103 together coordinate Zn(2+).

In terms of assembly, interacts with SSC1; binds to the nucleotide-free state as well as to the ADP- or ATP-bound state of SSC1. Zn(2+) serves as cofactor.

It localises to the mitochondrion inner membrane. Involved in protein import into mitochondria. Acts as a Hsp70-specific chaperone that prevents self-aggregation of the matrix Hsp70 chaperones SSC1 (mtHSP70) and SSQ1, thereby maintaining their function in mitochondrial protein import and Fe/S protein biosynthesis. May act together with PAM18 as co-chaperone to facilitate recognition and folding of imported proteins by SSC1 in the mitochondrial matrix. The polypeptide is Mitochondrial protein import protein ZIM17 (ZIM17) (Saccharomyces cerevisiae (strain AWRI1631) (Baker's yeast)).